The chain runs to 272 residues: Octanoyltransferase (272 aa).

The segment covering 1 to 12 has biased composition (polar residues); the sequence is MQQDPPTSQPHT. The interval 1–20 is disordered; sequence MQQDPPTSQPHTPQIVDGVK. A BPL/LPL catalytic domain is found at 65-255; that stretch reads HQRPNTVIYV…EMMSFQPYEM (191 aa). Substrate contacts are provided by residues 103–110, 175–177, and 188–190; these read RGGEITWH, AIG, and GFA. Catalysis depends on cysteine 206, which acts as the Acyl-thioester intermediate.

This sequence belongs to the LipB family.

It is found in the cytoplasm. It catalyses the reaction octanoyl-[ACP] + L-lysyl-[protein] = N(6)-octanoyl-L-lysyl-[protein] + holo-[ACP] + H(+). The protein operates within protein modification; protein lipoylation via endogenous pathway; protein N(6)-(lipoyl)lysine from octanoyl-[acyl-carrier-protein]: step 1/2. In terms of biological role, catalyzes the transfer of endogenously produced octanoic acid from octanoyl-acyl-carrier-protein onto the lipoyl domains of lipoate-dependent enzymes. Lipoyl-ACP can also act as a substrate although octanoyl-ACP is likely to be the physiological substrate. The polypeptide is Octanoyltransferase (Cutibacterium acnes (strain DSM 16379 / KPA171202) (Propionibacterium acnes)).